The chain runs to 696 residues: Interleukin-1 receptor accessory protein-like 1 (696 aa).

A signal peptide spans 1–18 (MKAPIPHLILLYATFTQS). The Ig-like C2-type 1 domain maps to 19-134 (LKVVTKRGSA…YCMKVSISLT (116 aa)). Residues 19–357 (LKVVTKRGSA…LLHKRELMYT (339 aa)) lie on the Extracellular side of the membrane. Disulfide bonds link Cys-31/Cys-126 and Cys-53/Cys-118. Asn-63, Asn-122, and Asn-138 each carry an N-linked (GlcNAc...) asparagine glycan. 2 disulfide bridges follow: Cys-143–Cys-185 and Cys-164–Cys-216. 2 consecutive Ig-like C2-type domains span residues 143–232 (CYNS…TELT) and 242–350 (PKLL…VLLH). N-linked (GlcNAc...) asparagine glycans are attached at residues Asn-213, Asn-264, and Asn-331. Cys-267 and Cys-334 are disulfide-bonded. A helical membrane pass occupies residues 358 to 378 (VELAGGLGAILLLLVCLVTIY). At 379 to 696 (KCYKIEIMLF…RETSISSVIW (318 aa)) the chain is on the cytoplasmic side. Residues 403-559 (KDYDAYLSYT…KFWKRLQYEM (157 aa)) form the TIR domain. Glu-491 is an active-site residue. An interaction with NCS1 region spans residues 549 to 644 (SKFWKRLQYE…TGTLPLTSIG (96 aa)). The tract at residues 659 to 680 (GQRPQTKSSREQNPDEAHTNSA) is disordered. Residues 666–676 (SSREQNPDEAH) show a composition bias toward basic and acidic residues.

It belongs to the interleukin-1 receptor family. Homodimer. Interacts (calcium-independent) with NCS1. Interacts (via the first immunoglobilin domain) with PTPRD (via the second immunoglobilin domain); this interaction is PTPRD-splicing-dependent and induces pre- and post-synaptic differentiation of neurons and is required for IL1RAPL1-mediated synapse formation. In terms of tissue distribution, detected at low levels in heart, skeletal muscle, ovary, skin, amygdala, caudate nucleus, corpus callosum, hippocampus, substantia nigra and thalamus. Detected at very low levels in tonsil, prostate, testis, small intestine, placenta, colon and fetal liver.

It localises to the cell membrane. It is found in the cytoplasm. Its subcellular location is the cell projection. The protein localises to the axon. The protein resides in the dendrite. The catalysed reaction is NAD(+) + H2O = ADP-D-ribose + nicotinamide + H(+). In terms of biological role, may regulate secretion and presynaptic differentiation through inhibition of the activity of N-type voltage-gated calcium channel. May activate the MAP kinase JNK. Plays a role in neurite outgrowth. During dendritic spine formation can bidirectionally induce pre- and post-synaptic differentiation of neurons by trans-synaptically binding to PTPRD. The polypeptide is Interleukin-1 receptor accessory protein-like 1 (IL1RAPL1) (Homo sapiens (Human)).